The sequence spans 345 residues: Trace amine-associated receptor 6 (345 aa).

The Extracellular segment spans residues 1 to 32 (MSSNSSLLVAVQLCYPNVNGSCVETLYSPGSR). Residues asparagine 4 and asparagine 19 are each glycosylated (N-linked (GlcNAc...) asparagine). 2 disulfides stabilise this stretch: cysteine 22-cysteine 186 and cysteine 105-cysteine 190. The helical transmembrane segment at 33 to 53 (VILYIVFGFGAVLAVFGNLLV) threads the bilayer. Residues 54-68 (MISILHFKQLHSPTN) are Cytoplasmic-facing. Residues 69–89 (FLVASLACADFLVGVTVMPFS) form a helical membrane-spanning segment. Over 90-107 (MVRTVESCWYFGRSFCTF) the chain is Extracellular. The chain crosses the membrane as a helical span at residues 108–128 (HTCCDVAFCYSSLFHLCFISI). Over 129-147 (DRYIAVTDPLVYPTKFTVS) the chain is Cytoplasmic. Residues 148-168 (VSGICISVSWILPLMYSGAVF) form a helical membrane-spanning segment. Over 169-202 (YTGVYDDGLEELSDALNCIGGCQTVVNQNWVLID) the chain is Extracellular. The helical transmembrane segment at 203 to 223 (CLSFFIPTFIMIILYGNIFLV) threads the bilayer. Residues 224–259 (ARRQAKKIENTGSKTESSSESYKARVARRERKAAKT) lie on the Cytoplasmic side of the membrane. The helical transmembrane segment at 260 to 276 (LGVTVVAFMISWLPYSI) threads the bilayer. Residues 277-282 (DSLIDA) are Extracellular-facing. The chain crosses the membrane as a helical span at residues 283-302 (FMGFITPAYIYEICCWCAYY). Topologically, residues 303–345 (NSAMNPLIYALFYPWFRKAIKVIVTGQVLKNSSATMNLFSEHI) are cytoplasmic.

It belongs to the G-protein coupled receptor 1 family.

It is found in the cell membrane. Its function is as follows. Olfactory receptor specific for trace amines, such as beta-phenylethylamine (beta-PEA). Trace amine compounds are enriched in animal body fluids and act on trace amine-associated receptors (TAARs) to elicit both intraspecific and interspecific innate behaviors. Beta-PEA-binding causes a conformation change that triggers signaling via G(s)-class of G alpha proteins (GNAL or GNAS). This Pan troglodytes (Chimpanzee) protein is Trace amine-associated receptor 6 (TAAR6).